The chain runs to 565 residues: Probable beta-glucosidase btgE (565 aa).

The N-terminal stretch at 1 to 18 (MRGAILATAAALAGTAMA) is a signal peptide. The interval 246–304 (TGQDEPTSAPAAPSTTAVPATTTAAPETTTAAPDTTTAVPSTSSAAPSSSSTAPASTGA) is disordered. Low complexity predominate over residues 251–304 (PTSAPAAPSTTAVPATTTAAPETTTAAPDTTTAVPSTSSAAPSSSSTAPASTGA). Glu405 (proton donor) is an active-site residue. Residue Glu501 is the Nucleophile of the active site.

This sequence belongs to the glycosyl hydrolase 17 family.

The protein resides in the secreted. It is found in the cell wall. It catalyses the reaction Hydrolysis of terminal, non-reducing beta-D-glucosyl residues with release of beta-D-glucose.. It functions in the pathway glycan metabolism; cellulose degradation. Functionally, beta-glucosidases are one of a number of cellulolytic enzymes involved in the degradation of cellulosic biomass. Catalyzes the last step releasing glucose from the inhibitory cellobiose. The polypeptide is Probable beta-glucosidase btgE (btgE) (Aspergillus fumigatus (strain CBS 144.89 / FGSC A1163 / CEA10) (Neosartorya fumigata)).